The chain runs to 478 residues: MPREIITLQVGQCGNQIGTEFWGRLIAEHGIGPDGIVKEFATEGTDRKDVFFYQADDQHYIPRALLIDLEPRVINSLQESEFKNLWNPENVYIDSQGGGAGNNWAVGYTHATEKYEHIMDMIDREDNSDSLEGFVLTHSIAGGTGSGFGSHMLEQLTDRYPKKIIQTYSVFPNDSERSSVVVHPYNSVLALKRLILNADAVVVIDNTSLHRIADERLQLDFASFKETNSIISTVMAASTTTLRYPGYMNNDLVGLIASLVPTPRAHFLMTSFTPLVIKGAQRRIQKTSVLDVMRRLLQPKNIMVSCGTKKGVYVSILDIIRGDVDPTDIHKSLQRIREKKIVNFIPWGPASIQVALSKQSPYANVPYRVSGCMMANHSNLGNLFARIIRTYDILRKRNAFLNVYKETPVFSENLDEFEDAKETITNLIEEYKAIQTSDYINWGMKQQQSQISQKESSSLANENGNGANNKPGKSAMAL.

141–147 (AGGTGSG) is a binding site for GTP. Positions 451-478 (ISQKESSSLANENGNGANNKPGKSAMAL) are disordered. Residues 459 to 468 (LANENGNGAN) are compositionally biased toward polar residues.

Belongs to the tubulin family.

Its subcellular location is the cytoplasm. It is found in the cytoskeleton. The protein localises to the microtubule organizing center. It localises to the centrosome. Its function is as follows. Tubulin is the major constituent of microtubules. The gamma chain is found at microtubule organizing centers (MTOC) such as the spindle poles or the centrosome, suggesting that it is involved in the minus-end nucleation of microtubule assembly. The protein is Tubulin gamma chain of Reticulomyxa filosa.